Here is a 370-residue protein sequence, read N- to C-terminus: UDP-N-acetylglucosamine--N-acetylmuramyl-(pentapeptide) pyrophosphoryl-undecaprenol N-acetylglucosamine transferase (370 aa).

Residues 10-12, Asn124, Arg166, Ser198, Ile252, and Gln297 contribute to the UDP-N-acetyl-alpha-D-glucosamine site; that span reads TGG.

Belongs to the glycosyltransferase 28 family. MurG subfamily.

It localises to the cell membrane. It carries out the reaction di-trans,octa-cis-undecaprenyl diphospho-N-acetyl-alpha-D-muramoyl-L-alanyl-D-glutamyl-meso-2,6-diaminopimeloyl-D-alanyl-D-alanine + UDP-N-acetyl-alpha-D-glucosamine = di-trans,octa-cis-undecaprenyl diphospho-[N-acetyl-alpha-D-glucosaminyl-(1-&gt;4)]-N-acetyl-alpha-D-muramoyl-L-alanyl-D-glutamyl-meso-2,6-diaminopimeloyl-D-alanyl-D-alanine + UDP + H(+). The protein operates within cell wall biogenesis; peptidoglycan biosynthesis. Its function is as follows. Cell wall formation. Catalyzes the transfer of a GlcNAc subunit on undecaprenyl-pyrophosphoryl-MurNAc-pentapeptide (lipid intermediate I) to form undecaprenyl-pyrophosphoryl-MurNAc-(pentapeptide)GlcNAc (lipid intermediate II). This is UDP-N-acetylglucosamine--N-acetylmuramyl-(pentapeptide) pyrophosphoryl-undecaprenol N-acetylglucosamine transferase from Finegoldia magna (strain ATCC 29328 / DSM 20472 / WAL 2508) (Peptostreptococcus magnus).